Reading from the N-terminus, the 619-residue chain is Mitogen-activated protein kinase kinase kinase 2 (619 aa).

Disordered regions lie at residues 25-44 (LSLQ…QNDV), 126-168 (QATN…PPPG), 201-245 (LDPL…DNHQ), and 289-355 (RTQG…APTN). Ser-26 carries the post-translational modification Phosphoserine. One can recognise a PB1 domain in the interval 43 to 122 (DVRVKFEHRG…KSLKILLVVN (80 aa)). The segment covering 126-143 (QATNLEPSPSPEDLNNTP) has biased composition (polar residues). 2 positions are modified to phosphoserine: Ser-153 and Ser-164. Positions 203-219 (PLSLSSPENSGSGSCPS) are enriched in low complexity. Phosphoserine is present on residues Ser-239, Ser-297, Ser-311, Ser-331, Ser-344, and Ser-349. Residues 290 to 299 (TQGTSFRSPV) are compositionally biased toward polar residues. Positions 300-315 (SFSPTDHSLSTSSGSS) are enriched in low complexity. Positions 322 to 332 (DDSRIRRRGSD) are enriched in basic and acidic residues. The segment covering 336 to 346 (PTLTVTDISPP) has biased composition (polar residues). Positions 356 to 616 (WRLGKLLGQG…AEELLRHMFV (261 aa)) constitute a Protein kinase domain. Residues 362–370 (LGQGAFGRV) and Lys-385 contribute to the ATP site. Asp-483 serves as the catalytic Proton acceptor.

Belongs to the protein kinase superfamily. STE Ser/Thr protein kinase family. MAP kinase kinase kinase subfamily. As to quaternary structure, self-associates. Binds both upstream activators and downstream substrates in multimolecular complexes. Interacts (via the kinase catalytic domain) with STK38. Interacts with XIAP/BIRC4. It depends on Mg(2+) as a cofactor. Ubiquitination by XIAP/BIRC4 does not lead to proteasomal degradation. Post-translationally, autophosphorylated.

It is found in the cytoplasm. The protein localises to the nucleus. The enzyme catalyses L-seryl-[protein] + ATP = O-phospho-L-seryl-[protein] + ADP + H(+). The catalysed reaction is L-threonyl-[protein] + ATP = O-phospho-L-threonyl-[protein] + ADP + H(+). Activated by phosphorylation on Thr-524. Interacts with PKN2; the interaction activates PKN2 kinase activity in a MAP3K2-independent kinase activity. Functionally, component of a protein kinase signal transduction cascade. Regulates the JNK and ERK5 pathways by phosphorylating and activating MAP2K5 and MAP2K7. Plays a role in caveolae kiss-and-run dynamics. In Mus musculus (Mouse), this protein is Mitogen-activated protein kinase kinase kinase 2 (Map3k2).